Consider the following 375-residue polypeptide: Ornithine transcarbamylase, chloroplastic (375 aa).

Residues 1-53 (MAAAMASHVSTARSPALSFSSSSSSFFPGTTLRRFSAVSLPSPALPRLRVSCQ) constitute a chloroplast transit peptide. A54 carries the N-acetylalanine modification. Carbamoyl phosphate contacts are provided by residues 123-126 (SMRT), R174, H201, and Q204. L-ornithine is bound by residues N232, D293, S297, and M298. The Proton acceptor role is filled by C333. Residues 333–334 (CL) and R361 contribute to the carbamoyl phosphate site.

The protein belongs to the aspartate/ornithine carbamoyltransferase superfamily. OTCase family.

Its subcellular location is the plastid. The protein localises to the chloroplast. It carries out the reaction carbamoyl phosphate + L-ornithine = L-citrulline + phosphate + H(+). This is Ornithine transcarbamylase, chloroplastic (OTC) from Arabidopsis thaliana (Mouse-ear cress).